The sequence spans 445 residues: Glycine--tRNA ligase (445 aa).

Residues arginine 97 and glutamate 145 each coordinate substrate. ATP contacts are provided by residues 177–179, 187–192, 262–263, and 308–311; these read RNE, FRTCEF, EV, and GLTR. 192 to 196 serves as a coordination point for substrate; the sequence is FEQME. 304–308 serves as a coordination point for substrate; sequence ETSAG.

The protein belongs to the class-II aminoacyl-tRNA synthetase family. In terms of assembly, homodimer.

It localises to the cytoplasm. The catalysed reaction is tRNA(Gly) + glycine + ATP = glycyl-tRNA(Gly) + AMP + diphosphate. Functionally, catalyzes the attachment of glycine to tRNA(Gly). This Borreliella burgdorferi (strain ZS7) (Borrelia burgdorferi) protein is Glycine--tRNA ligase.